The sequence spans 66 residues: Venom peptide CtAPI (66 aa).

Cystine bridges form between cysteine 7-cysteine 44, cysteine 16-cysteine 40, cysteine 20-cysteine 33, cysteine 24-cysteine 64, and cysteine 46-cysteine 58. Positions 7–64 (CEKDEEFVNCAPRCPQNCRNIRSYQPCLVLTPVCAPGCVCRSGKVKNDRGDCVSITDC) constitute a TIL domain.

It belongs to the serine protease inhibitor-like (TIL domain-containing) family. Expressed by the venom gland.

The protein resides in the secreted. Functionally, serine protease inhibitor. The protein is Venom peptide CtAPI of Chaerilus tricostatus (Scorpion).